Here is a 301-residue protein sequence, read N- to C-terminus: Probable protein phosphatase 2C 4 (301 aa).

Residues 1-18 (MGPYLSQPNKNKTTTSGE) are compositionally biased toward polar residues. The interval 1–20 (MGPYLSQPNKNKTTTSGEGK) is disordered. The region spanning 23–298 (IFAASEMQGW…DNMTTLIIYL (276 aa)) is the PPM-type phosphatase domain. The Mn(2+) site is built by aspartate 57, glycine 58, aspartate 237, and aspartate 289.

Belongs to the PP2C family. It depends on Mg(2+) as a cofactor. Mn(2+) serves as cofactor.

The protein resides in the membrane. The catalysed reaction is O-phospho-L-seryl-[protein] + H2O = L-seryl-[protein] + phosphate. The enzyme catalyses O-phospho-L-threonyl-[protein] + H2O = L-threonyl-[protein] + phosphate. Functionally, enzyme with a broad specificity. This is Probable protein phosphatase 2C 4 from Paramecium tetraurelia.